The chain runs to 577 residues: Arginine--tRNA ligase (577 aa).

The 'HIGH' region motif lies at 122-132 (PNVAKEMHVGH).

It belongs to the class-I aminoacyl-tRNA synthetase family. In terms of assembly, monomer.

The protein localises to the cytoplasm. It carries out the reaction tRNA(Arg) + L-arginine + ATP = L-arginyl-tRNA(Arg) + AMP + diphosphate. The sequence is that of Arginine--tRNA ligase from Escherichia coli O81 (strain ED1a).